The primary structure comprises 408 residues: MGRPYVTLNLNGMFMDKFKPYSKSNAPITTLEKLSKALSISVEELKAIAELPLDEKYTLKEIPKIDGSKRIVYSLHPKMRLLQSRINKRIFKELVVFPSFLFGSVPSKNDVLNSNVKRDYVSCAKAHCGAKTVLKVDISNFFDNIHRDLVRSVFEEILHIKDEALEYLVDICTKDDFVVQGALTSSYIATLCLFAVEGDVVRRAQRKGLVYTRLVDDITVSSKISNYDFSQMQSHIERMLSEHDLPINKRKTKIFHCSSEPIKVHGLRVDYDSPRLPSDEVKRIRASIHNLKLLAAKNNTKTSVAYRKEFNRCMGRVNKLGRVAHEKYESFKKQLQAIKPMPSKRDVAVIDAAIKSLELSYSKGNQNKHWYKRKYDLTRYKMIILTRSESFKEKLECFKSRLASLKPL.

The region spanning 43 to 269 (EELKAIAELP…EPIKVHGLRV (227 aa)) is the Reverse transcriptase domain. Aspartate 137, aspartate 216, and aspartate 217 together coordinate Mg(2+).

Belongs to the bacterial reverse transcriptase family.

It carries out the reaction DNA(n) + a 2'-deoxyribonucleoside 5'-triphosphate = DNA(n+1) + diphosphate. Reverse transcriptase (RT) component of antiviral defense system retron Ec48, composed of a non-coding RNA (ncRNA), this reverse transcriptase (RT) and the following membrane protein. Expression of this retron confers protection against bacteriophages lambda, T2, T4, T5 and T7. At multiplicity of infection (MOI) of 0.02 cultures grow normally when infected with lambda without collapsing, at MOI 2 cultures enter growth stasis. At MOI 3 cell membranes are permeabilized within 15 minutes of infection but do not lyse, suggesting the phage are not able to finish a replication cycle. Antiviral defense is suppressed by mutations that knockout the lambda gam expression or phage T7 gp5.9 expression; both viral genes inhibit host RecBCD. The Ec48 retron may sense the integrity of the RecBCD enzyme; when RecBCD is perturbed by viral proteins the Ec48 effector (the membrane protein) is activated, leading to abortive infection and bacterial growth arrest. Responsible for synthesis of msDNA-Ec48 (a branched molecule with RNA linked by a 2',5'-phosphodiester bond to ssDNA). The retron transcript serves as primer (from a conserved internal G residue) and template for the reaction, and codes for the RT. This chain is Retron Ec48 reverse transcriptase, found in Escherichia coli.